Reading from the N-terminus, the 643-residue chain is MIEIFIEDLNQKFTFNEGITLKDILKNLNGKFKDVVGGKLNGEIIDIHTPINQSGNLKFLKKEDKESLEILRHSLAHIMAQALKEIYGDENVHLGIGPTTEHGFYYDVEIEGKSLTDEDLPQIEEKMKEIIKKGYQIERFELPREEAIKFFENKKEIYKIDIIKHNIPEGEPISLYKQGDFVDLCRGPHLPSTDKAGAFKLISVSGAYWRGKETNPMLQRIYGVAFWSEKELKDYLNMLEEAKKRDHRKIGKDLELFLIDEEIGGGLAIWLPKGAIIRKEIEDAWKKEHLKRGYQLVYTPHVGKEQLWQTSGHLSFYQENMYPRMQIEEEGYYVKPMNCPFHVEIYKSKQRSYKEFPIRLAELGTVYRYERSGALHGLMRVRGFTQDDAHIICREDQVEDEIREVLNLALNTLKSYGFDEFEVYLSTKPEKYVGDDKMWEVAENSLRKAIESTGLDYKIDDGGGAFYGPKIDVKIKDAIGRLWQCSTIQFDFNLPERFDMYYIGEDNQKHRPYMIHRAIFGSIERFIGVLLEHYAGFLPVWLSPVQVKIIPIADKHLEYAETVKQKLLENDIRVELDDRNERMNKKIRDAELQKIPFMLVVGDKEAETGTVAVREKGKQGSQTLSIDEFVSKIKEIISNKHVL.

Residues 1 to 61 (MIEIFIEDLN…NQSGNLKFLK (61 aa)) form the TGS domain. Residues 246–539 (DHRKIGKDLE…LLEHYAGFLP (294 aa)) form a catalytic region. Residues C339, H390, and H516 each contribute to the Zn(2+) site.

The protein belongs to the class-II aminoacyl-tRNA synthetase family. Homodimer. Zn(2+) serves as cofactor.

Its subcellular location is the cytoplasm. The enzyme catalyses tRNA(Thr) + L-threonine + ATP = L-threonyl-tRNA(Thr) + AMP + diphosphate + H(+). In terms of biological role, catalyzes the attachment of threonine to tRNA(Thr) in a two-step reaction: L-threonine is first activated by ATP to form Thr-AMP and then transferred to the acceptor end of tRNA(Thr). Also edits incorrectly charged L-seryl-tRNA(Thr). The protein is Threonine--tRNA ligase of Sulfurihydrogenibium sp. (strain YO3AOP1).